Reading from the N-terminus, the 426-residue chain is D-tagatose-1,6-bisphosphate aldolase subunit KbaZ (426 aa).

This sequence belongs to the GatZ/KbaZ family. KbaZ subfamily. In terms of assembly, forms a complex with KbaY.

It functions in the pathway carbohydrate metabolism; D-tagatose 6-phosphate degradation; D-glyceraldehyde 3-phosphate and glycerone phosphate from D-tagatose 6-phosphate: step 2/2. In terms of biological role, component of the tagatose-1,6-bisphosphate aldolase KbaYZ that is required for full activity and stability of the Y subunit. Could have a chaperone-like function for the proper and stable folding of KbaY. When expressed alone, KbaZ does not show any aldolase activity. This Shigella flexneri protein is D-tagatose-1,6-bisphosphate aldolase subunit KbaZ.